The primary structure comprises 272 residues: Shikimate dehydrogenase (NADP(+)) (272 aa).

Residues 14-16 (SKS) and T61 each bind shikimate. Catalysis depends on K65, which acts as the Proton acceptor. Position 77 (E77) interacts with NADP(+). Shikimate is bound by residues N86 and D102. NADP(+) is bound by residues 126 to 130 (GAGGA), 149 to 154 (NRTVSR), and M213. Y215 contributes to the shikimate binding site. An NADP(+)-binding site is contributed by G237.

This sequence belongs to the shikimate dehydrogenase family. In terms of assembly, homodimer.

It catalyses the reaction shikimate + NADP(+) = 3-dehydroshikimate + NADPH + H(+). Its pathway is metabolic intermediate biosynthesis; chorismate biosynthesis; chorismate from D-erythrose 4-phosphate and phosphoenolpyruvate: step 4/7. Involved in the biosynthesis of the chorismate, which leads to the biosynthesis of aromatic amino acids. Catalyzes the reversible NADPH linked reduction of 3-dehydroshikimate (DHSA) to yield shikimate (SA). In Escherichia coli O7:K1 (strain IAI39 / ExPEC), this protein is Shikimate dehydrogenase (NADP(+)).